The sequence spans 143 residues: Large ribosomal subunit protein uL11 (143 aa).

Belongs to the universal ribosomal protein uL11 family. As to quaternary structure, part of the ribosomal stalk of the 50S ribosomal subunit. Interacts with L10 and the large rRNA to form the base of the stalk. L10 forms an elongated spine to which L12 dimers bind in a sequential fashion forming a multimeric L10(L12)X complex. One or more lysine residues are methylated.

In terms of biological role, forms part of the ribosomal stalk which helps the ribosome interact with GTP-bound translation factors. In Thiobacillus denitrificans (strain ATCC 25259 / T1), this protein is Large ribosomal subunit protein uL11.